A 480-amino-acid chain; its full sequence is Aspartyl/glutamyl-tRNA(Asn/Gln) amidotransferase subunit B (480 aa).

It belongs to the GatB/GatE family. GatB subfamily. Heterotrimer of A, B and C subunits.

It carries out the reaction L-glutamyl-tRNA(Gln) + L-glutamine + ATP + H2O = L-glutaminyl-tRNA(Gln) + L-glutamate + ADP + phosphate + H(+). The enzyme catalyses L-aspartyl-tRNA(Asn) + L-glutamine + ATP + H2O = L-asparaginyl-tRNA(Asn) + L-glutamate + ADP + phosphate + 2 H(+). Its function is as follows. Allows the formation of correctly charged Asn-tRNA(Asn) or Gln-tRNA(Gln) through the transamidation of misacylated Asp-tRNA(Asn) or Glu-tRNA(Gln) in organisms which lack either or both of asparaginyl-tRNA or glutaminyl-tRNA synthetases. The reaction takes place in the presence of glutamine and ATP through an activated phospho-Asp-tRNA(Asn) or phospho-Glu-tRNA(Gln). The protein is Aspartyl/glutamyl-tRNA(Asn/Gln) amidotransferase subunit B of Streptococcus pneumoniae (strain ATCC 700669 / Spain 23F-1).